The chain runs to 574 residues: Intraflagellar transport protein 56 homolog (574 aa).

TPR repeat units follow at residues 20–52, 57–90, and 151–184; these read AQKM…GNLD, DSLQ…DDAP, and LEDR…SPNL.

Belongs to the IFT56 family. In terms of assembly, component of the IFT complex B composed of at least che-2, che-13, dyf-1, dyf-3, dyf-6, dyf-11, dyf-13, ift-20, ift-74, ift-81, ifta-2, osm-1, osm-5 and osm-6.

Its subcellular location is the cell projection. The protein localises to the cilium. In terms of biological role, component of the intraflagellar transport (IFT) complex B required for transport of proteins in the motile cilium. May be required for ciliary entrance and transport of specific ciliary cargo proteins such as che-3 which are related to motility. This chain is Intraflagellar transport protein 56 homolog, found in Caenorhabditis elegans.